We begin with the raw amino-acid sequence, 136 residues long: MGKDTIADIITSIRNADMNRKGTVRIASTNITENVVKILLREGFIENARKLVENKNKKEFLVLTLRHRRNRKGPYRPILNLKRISRPGLRIYFNYRRIPRILDGMGIVILSTSRGIMTDRAARLERIGGEILCYIW.

This sequence belongs to the universal ribosomal protein uS8 family. Part of the 30S ribosomal subunit.

It localises to the plastid. The protein localises to the chloroplast. One of the primary rRNA binding proteins, it binds directly to 16S rRNA central domain where it helps coordinate assembly of the platform of the 30S subunit. The polypeptide is Small ribosomal subunit protein uS8c (rps8) (Citrus sinensis (Sweet orange)).